A 467-amino-acid chain; its full sequence is Argininosuccinate lyase (467 aa).

The protein belongs to the lyase 1 family. Argininosuccinate lyase subfamily.

The protein resides in the cytoplasm. The enzyme catalyses 2-(N(omega)-L-arginino)succinate = fumarate + L-arginine. Its pathway is amino-acid biosynthesis; L-arginine biosynthesis; L-arginine from L-ornithine and carbamoyl phosphate: step 3/3. In Methylibium petroleiphilum (strain ATCC BAA-1232 / LMG 22953 / PM1), this protein is Argininosuccinate lyase.